The primary structure comprises 338 residues: Heat-inducible transcription repressor HrcA (338 aa).

This sequence belongs to the HrcA family.

Negative regulator of class I heat shock genes (grpE-dnaK-dnaJ and groELS operons). Prevents heat-shock induction of these operons. In Streptomyces avermitilis (strain ATCC 31267 / DSM 46492 / JCM 5070 / NBRC 14893 / NCIMB 12804 / NRRL 8165 / MA-4680), this protein is Heat-inducible transcription repressor HrcA.